Here is a 217-residue protein sequence, read N- to C-terminus: N-(5'-phosphoribosyl)anthranilate isomerase (217 aa).

It belongs to the TrpF family.

It catalyses the reaction N-(5-phospho-beta-D-ribosyl)anthranilate = 1-(2-carboxyphenylamino)-1-deoxy-D-ribulose 5-phosphate. It functions in the pathway amino-acid biosynthesis; L-tryptophan biosynthesis; L-tryptophan from chorismate: step 3/5. The sequence is that of N-(5'-phosphoribosyl)anthranilate isomerase from Chlorobium luteolum (strain DSM 273 / BCRC 81028 / 2530) (Pelodictyon luteolum).